Reading from the N-terminus, the 331-residue chain is Sideroflexin-5 (331 aa).

The next 4 helical transmembrane spans lie at 104–126 (PFGWITVTGMLLPNPSWPTLLFW), 153–175 (YIGAYGAAVTAACSISGGLTYFI), 243–265 (TTMVRAFLPVPLLLMPPCIMPYL), and 278–300 (HIFVNAIVCTLSFAVSLPVALAL).

The protein belongs to the sideroflexin family.

It is found in the mitochondrion inner membrane. The catalysed reaction is citrate(in) = citrate(out). Functionally, mitochondrial amino-acid transporter. This Caenorhabditis elegans protein is Sideroflexin-5.